Reading from the N-terminus, the 166-residue chain is Regulatory protein RecX (166 aa).

The protein belongs to the RecX family.

It localises to the cytoplasm. Its function is as follows. Modulates RecA activity. The chain is Regulatory protein RecX from Shigella sonnei (strain Ss046).